We begin with the raw amino-acid sequence, 89 residues long: Small ribosomal subunit protein uS15 (89 aa).

It belongs to the universal ribosomal protein uS15 family. In terms of assembly, part of the 30S ribosomal subunit. Forms a bridge to the 50S subunit in the 70S ribosome, contacting the 23S rRNA.

Its function is as follows. One of the primary rRNA binding proteins, it binds directly to 16S rRNA where it helps nucleate assembly of the platform of the 30S subunit by binding and bridging several RNA helices of the 16S rRNA. In terms of biological role, forms an intersubunit bridge (bridge B4) with the 23S rRNA of the 50S subunit in the ribosome. The protein is Small ribosomal subunit protein uS15 of Nitrosospira multiformis (strain ATCC 25196 / NCIMB 11849 / C 71).